Here is a 620-residue protein sequence, read N- to C-terminus: LEAF RUST 10 DISEASE-RESISTANCE LOCUS RECEPTOR-LIKE PROTEIN KINASE-like 2.3 (620 aa).

The signal sequence occupies residues 1–30; it reads MDSLSSMGFQTASFFLILLFLFYHLPCVPS. The Extracellular portion of the chain corresponds to 31–256; that stretch reads QQERSRLCKP…NNGTYSDNRP (226 aa). Residues N75, N85, N93, N132, N148, N162, N189, N231, and N248 are each glycosylated (N-linked (GlcNAc...) asparagine). Residues 257-277 traverse the membrane as a helical segment; it reads FLVTIGTVLGSILCVCVVLFL. Residues 278–620 are Cytoplasmic-facing; sequence AFYLNERRIA…SVESSIYSEV (343 aa). The Protein kinase domain occupies 314–596; it reads KSFTEVVGRG…SLDPPPKPLL (283 aa). ATP contacts are provided by residues 320–328 and K342; that span reads VGRGGFGTV. Residue D431 is the Proton acceptor of the active site. The tract at residues 586–620 is disordered; it reads DSLDPPPKPLLHMPMQNNNAESSQLSVESSIYSEV. Positions 600 to 620 are enriched in polar residues; sequence MQNNNAESSQLSVESSIYSEV.

It belongs to the protein kinase superfamily. Ser/Thr protein kinase family.

The protein localises to the membrane. The enzyme catalyses L-seryl-[protein] + ATP = O-phospho-L-seryl-[protein] + ADP + H(+). It catalyses the reaction L-threonyl-[protein] + ATP = O-phospho-L-threonyl-[protein] + ADP + H(+). This is LEAF RUST 10 DISEASE-RESISTANCE LOCUS RECEPTOR-LIKE PROTEIN KINASE-like 2.3 from Arabidopsis thaliana (Mouse-ear cress).